Reading from the N-terminus, the 361-residue chain is Phosphoserine aminotransferase (361 aa).

An L-glutamate-binding site is contributed by R43. Pyridoxal 5'-phosphate contacts are provided by residues A77–S78, W103, T153, D173, and Q196. K197 carries the N6-(pyridoxal phosphate)lysine modification. Position 238–239 (N238–T239) interacts with pyridoxal 5'-phosphate.

Belongs to the class-V pyridoxal-phosphate-dependent aminotransferase family. SerC subfamily. In terms of assembly, homodimer. Requires pyridoxal 5'-phosphate as cofactor.

The protein localises to the cytoplasm. The catalysed reaction is O-phospho-L-serine + 2-oxoglutarate = 3-phosphooxypyruvate + L-glutamate. It catalyses the reaction 4-(phosphooxy)-L-threonine + 2-oxoglutarate = (R)-3-hydroxy-2-oxo-4-phosphooxybutanoate + L-glutamate. Its pathway is amino-acid biosynthesis; L-serine biosynthesis; L-serine from 3-phospho-D-glycerate: step 2/3. It functions in the pathway cofactor biosynthesis; pyridoxine 5'-phosphate biosynthesis; pyridoxine 5'-phosphate from D-erythrose 4-phosphate: step 3/5. Functionally, catalyzes the reversible conversion of 3-phosphohydroxypyruvate to phosphoserine and of 3-hydroxy-2-oxo-4-phosphonooxybutanoate to phosphohydroxythreonine. This chain is Phosphoserine aminotransferase, found in Stutzerimonas stutzeri (Pseudomonas stutzeri).